We begin with the raw amino-acid sequence, 571 residues long: NADH-quinone oxidoreductase subunit C/D (571 aa).

The NADH dehydrogenase I subunit C stretch occupies residues 1–171 (MQASEKTLNE…NLSNTMNYRR (171 aa)). Residues 194 to 571 (AQVVLNWGPL…LDPVVGEVDR (378 aa)) are NADH dehydrogenase I subunit D.

It in the N-terminal section; belongs to the complex I 30 kDa subunit family. This sequence in the C-terminal section; belongs to the complex I 49 kDa subunit family. As to quaternary structure, NDH-1 is composed of 13 different subunits. Subunits NuoB, CD, E, F, and G constitute the peripheral sector of the complex.

The protein resides in the cell inner membrane. It carries out the reaction a quinone + NADH + 5 H(+)(in) = a quinol + NAD(+) + 4 H(+)(out). In terms of biological role, NDH-1 shuttles electrons from NADH, via FMN and iron-sulfur (Fe-S) centers, to quinones in the respiratory chain. The immediate electron acceptor for the enzyme in this species is believed to be ubiquinone. Couples the redox reaction to proton translocation (for every two electrons transferred, four hydrogen ions are translocated across the cytoplasmic membrane), and thus conserves the redox energy in a proton gradient. This is NADH-quinone oxidoreductase subunit C/D (nuoC) from Hydrogenobaculum sp. (strain Y04AAS1).